Reading from the N-terminus, the 292-residue chain is Ribonuclease Z (292 aa).

H60, H62, D64, H65, H132, D200, and H256 together coordinate Zn(2+). Catalysis depends on D64, which acts as the Proton acceptor.

Belongs to the RNase Z family. Homodimer. The cofactor is Zn(2+).

The catalysed reaction is Endonucleolytic cleavage of RNA, removing extra 3' nucleotides from tRNA precursor, generating 3' termini of tRNAs. A 3'-hydroxy group is left at the tRNA terminus and a 5'-phosphoryl group is left at the trailer molecule.. Functionally, zinc phosphodiesterase, which displays some tRNA 3'-processing endonuclease activity. Probably involved in tRNA maturation, by removing a 3'-trailer from precursor tRNA. The sequence is that of Ribonuclease Z from Sulfolobus acidocaldarius (strain ATCC 33909 / DSM 639 / JCM 8929 / NBRC 15157 / NCIMB 11770).